The primary structure comprises 335 residues: Holliday junction branch migration complex subunit RuvB (335 aa).

The large ATPase domain (RuvB-L) stretch occupies residues 1 to 181; that stretch reads MDRIVEIEKY…FGMQFRLEFY (181 aa). ATP-binding positions include Leu-20, Arg-21, Gly-62, Lys-65, Thr-66, Thr-67, 128–130, Arg-171, Tyr-181, and Arg-218; that span reads EDY. Position 66 (Thr-66) interacts with Mg(2+). The interval 182–252 is small ATPAse domain (RuvB-S); the sequence is KDSELALILQ…RANEALNSLG (71 aa). The head domain (RuvB-H) stretch occupies residues 255-335; sequence ELGFDAMDLR…LNYEKTLFEE (81 aa). The DNA site is built by Arg-309 and Arg-314.

This sequence belongs to the RuvB family. Homohexamer. Forms an RuvA(8)-RuvB(12)-Holliday junction (HJ) complex. HJ DNA is sandwiched between 2 RuvA tetramers; dsDNA enters through RuvA and exits via RuvB. An RuvB hexamer assembles on each DNA strand where it exits the tetramer. Each RuvB hexamer is contacted by two RuvA subunits (via domain III) on 2 adjacent RuvB subunits; this complex drives branch migration. In the full resolvosome a probable DNA-RuvA(4)-RuvB(12)-RuvC(2) complex forms which resolves the HJ.

The protein resides in the cytoplasm. The enzyme catalyses ATP + H2O = ADP + phosphate + H(+). Its function is as follows. The RuvA-RuvB-RuvC complex processes Holliday junction (HJ) DNA during genetic recombination and DNA repair, while the RuvA-RuvB complex plays an important role in the rescue of blocked DNA replication forks via replication fork reversal (RFR). RuvA specifically binds to HJ cruciform DNA, conferring on it an open structure. The RuvB hexamer acts as an ATP-dependent pump, pulling dsDNA into and through the RuvAB complex. RuvB forms 2 homohexamers on either side of HJ DNA bound by 1 or 2 RuvA tetramers; 4 subunits per hexamer contact DNA at a time. Coordinated motions by a converter formed by DNA-disengaged RuvB subunits stimulates ATP hydrolysis and nucleotide exchange. Immobilization of the converter enables RuvB to convert the ATP-contained energy into a lever motion, pulling 2 nucleotides of DNA out of the RuvA tetramer per ATP hydrolyzed, thus driving DNA branch migration. The RuvB motors rotate together with the DNA substrate, which together with the progressing nucleotide cycle form the mechanistic basis for DNA recombination by continuous HJ branch migration. Branch migration allows RuvC to scan DNA until it finds its consensus sequence, where it cleaves and resolves cruciform DNA. This is Holliday junction branch migration complex subunit RuvB from Campylobacter jejuni subsp. doylei (strain ATCC BAA-1458 / RM4099 / 269.97).